Consider the following 154-residue polypeptide: Probable prefoldin subunit 5 (154 aa).

It belongs to the prefoldin subunit alpha family. As to quaternary structure, heterohexamer of two PFD-alpha type and four PFD-beta type subunits. Interacts with byr1.

It is found in the cytoplasm. Binds specifically to cytosolic chaperonin (c-CPN) and transfers target proteins to it. Binds to nascent polypeptide chain and promotes folding in an environment in which there are many competing pathways for nonnative proteins. Required for normal cytoskeletal function and when bound to byr1, is involved in the regulation of sexual differentiation. This Schizosaccharomyces pombe (strain 972 / ATCC 24843) (Fission yeast) protein is Probable prefoldin subunit 5 (bob1).